The chain runs to 1335 residues: Bifunctional autolysin (1335 aa).

A signal peptide spans 1-29 (MAKKFNYKLPSMVALTLFGTAFTAHQANA). Disordered stretches follow at residues 51-88 (QAEK…QSTT), 100-262 (NEIS…KYKE), and 514-535 (WGTT…NNKL). Polar residues-rich tracts occupy residues 58–88 (EVTQ…QSTT), 100–127 (NEIS…VTKN), 143–155 (TDTN…QSVA), 176–223 (TASQ…NASG), and 244–258 (SLNN…TTSY). The tract at residues 303–863 (VSSQKTSSLP…LSTQSTPAPK (561 aa)) is N-acetylmuramoyl-L-alanine amidase. Over residues 515-531 (GTTSTKPSQPSKPSGGT) the composition is skewed to low complexity. 7 GW domains span residues 533–610 (NKLT…YNTA), 612–686 (APVK…TASK), 700–774 (TVTN…YNTA), 776–850 (SPVK…APSK), 868–943 (STQT…TQNI), 945–1020 (KQTQ…QNST), and 1023–1096 (QSTP…KEKI). Residues 864-1335 (QVKPSTQTVN…GKYFEIPTYK (472 aa)) are endo-beta-N-acetylglucosaminidase.

In the N-terminal section; belongs to the N-acetylmuramoyl-L-alanine amidase 2 family. It in the C-terminal section; belongs to the glycosyl hydrolase 73 family. As to quaternary structure, oligomer; forms a ring structure at the cell surface which is important for efficient partitioning of daughter cells after cell division. Post-translationally, undergoes proteolytic processing to generate the two extracellular lytic enzymes, probably at the septal region on the cell surface.

It is found in the secreted. The enzyme catalyses Hydrolyzes the link between N-acetylmuramoyl residues and L-amino acid residues in certain cell-wall glycopeptides.. It catalyses the reaction an N(4)-(oligosaccharide-(1-&gt;3)-[oligosaccharide-(1-&gt;6)]-beta-D-Man-(1-&gt;4)-beta-D-GlcNAc-(1-&gt;4)-alpha-D-GlcNAc)-L-asparaginyl-[protein] + H2O = an oligosaccharide-(1-&gt;3)-[oligosaccharide-(1-&gt;6)]-beta-D-Man-(1-&gt;4)-D-GlcNAc + N(4)-(N-acetyl-beta-D-glucosaminyl)-L-asparaginyl-[protein]. In terms of biological role, endohydrolysis of the di-N-acetylchitobiosyl unit in high-mannose glycopeptides and glycoproteins containing the -[(Man)5(GlcNAc)2]-Asn structure. One N-acetyl-D-glucosamine residue remains attached to the protein; the rest of the oligosaccharide is released intact. Cleaves the peptidoglycan connecting the daughter cells at the end of the cell division cycle, resulting in the separation of the two newly divided cells. Acts as an autolysin in penicillin-induced lysis. As a bacterial surface-associated protein, mediates attachment to polystyrene surfaces, contributing to biofilm formation. Also has vitronectin-binding activity. The polypeptide is Bifunctional autolysin (atl) (Staphylococcus epidermidis).